The primary structure comprises 695 residues: Lysophospholipase 2 (695 aa).

The N-terminal stretch at 1–19 (MQLSVLIASVLAAGAAVDA) is a signal peptide. Asn26, Asn72, Asn83, Asn115, Asn152, Asn171, Asn207, Asn269, Asn335, Asn379, Asn480, Asn504, Asn513, Asn532, Asn556, Asn573, Asn620, Asn626, Asn644, and Asn648 each carry an N-linked (GlcNAc...) asparagine glycan. Residues 28 to 577 (SCPDNANFIR…TNYCWNGTID (550 aa)) form the PLA2c domain. The disordered stretch occupies residues 612 to 662 (NTGSGTKSNSSSKTNSTLVTSSRATSTGTLISNSSSNSTVSSTAARSSTSS).

Belongs to the lysophospholipase family.

It is found in the secreted. The protein resides in the cell wall. It catalyses the reaction a 1-acyl-sn-glycero-3-phosphocholine + H2O = sn-glycerol 3-phosphocholine + a fatty acid + H(+). Functionally, catalyzes the release of fatty acids from lysophospholipids. Phospholipase B may well contribute to pathogenicity by abetting the fungus in damaging and traversing host cell membranes, processes which likely increase the rapidity of disseminated infection. In Candida glabrata (strain ATCC 2001 / BCRC 20586 / JCM 3761 / NBRC 0622 / NRRL Y-65 / CBS 138) (Yeast), this protein is Lysophospholipase 2.